We begin with the raw amino-acid sequence, 397 residues long: MTKYFFSSSFLLFLGNWIGQIGLNWFVLTTYHNAVYLGIVNFCRLVPILLLSVWAGAIADKYDKGRLLRITISSSFLVTAILCVLTYSFTAIPISVIIIYATLRGILSAVETPLRQAILPDLSDKISTTQAVSFHSFIINICRSIGPAIAGVILAVYHAPTTFLAQAICYFIAVLLCLPLHFKVTKIPEDASRYMPLKVIIDYFKLHMEGRQIFITSLLIMATGFSYTTLLPVLTNKVFPGKSEIFGIAMTMCAIGGIIATLVLPKVLKYIGMVNMYYLSSFLFGIALLGVVFHNIVIMFICITLIGLFSQWARTTNRVYFQNNVKDYERGKVLSIIMMDRGMIPLGSLLMSICADVFGIVRTFSIMGISTICITMVFYFINRKLKLKLEESNHGIS.

The next 12 membrane-spanning stretches (helical) occupy residues 10 to 30, 39 to 59, 67 to 87, 93 to 110, 137 to 157, 162 to 182, 213 to 233, 245 to 265, 271 to 292, 296 to 313, 333 to 353, and 358 to 378; these read FLLF…VLTT, IVNF…GAIA, LLRI…VLTY, PISV…LSAV, FIIN…LAVY, TFLA…PLHF, IFIT…LLPV, IFGI…LVLP, IGMV…LGVV, IVIM…SQWA, VLSI…LMSI, and FGIV…TMVF.

The protein belongs to the major facilitator superfamily.

Its subcellular location is the cell membrane. Its function is as follows. Involved in staphyloferrin A secretion. The sequence is that of Staphyloferrin A transporter from Staphylococcus aureus (strain NCTC 8325 / PS 47).